The chain runs to 297 residues: MIPLSIRVPASTANVGPGFDSVGIALSLYLHVVVKEKSDKWQVIHSFEDSIPTDDKNLIVSTACKVCPSLSPHIIEVTSNIPLTRGLGSSASAIVAGIELANQLGKLNLTTDQKVQIATNFEGHPDNVAASILGGTVIGALDGKNVSVVRIESKELGVISLIPNEELNTDESRSVLPDVFPFHEAVKASAISNVLVAALCQKKWEVVGEMMERDHFHEPYRLELIPLLPSIRKCAKEFGAYGTALSGAGPSIFILTPYEKRQEIAEQLARVFTSMKVCELEIDHRGITVNKKEHIGL.

Residue 82–92 (PLTRGLGSSAS) coordinates ATP.

This sequence belongs to the GHMP kinase family. Homoserine kinase subfamily.

The protein resides in the cytoplasm. It carries out the reaction L-homoserine + ATP = O-phospho-L-homoserine + ADP + H(+). It functions in the pathway amino-acid biosynthesis; L-threonine biosynthesis; L-threonine from L-aspartate: step 4/5. Functionally, catalyzes the ATP-dependent phosphorylation of L-homoserine to L-homoserine phosphate. The sequence is that of Homoserine kinase from Bacillus cereus (strain ZK / E33L).